Reading from the N-terminus, the 244-residue chain is Phosphoadenosine 5'-phosphosulfate reductase (244 aa).

Catalysis depends on C239, which acts as the Nucleophile; cysteine thiosulfonate intermediate.

This sequence belongs to the PAPS reductase family. CysH subfamily.

It is found in the cytoplasm. It carries out the reaction [thioredoxin]-disulfide + sulfite + adenosine 3',5'-bisphosphate + 2 H(+) = [thioredoxin]-dithiol + 3'-phosphoadenylyl sulfate. It participates in sulfur metabolism; hydrogen sulfide biosynthesis; sulfite from sulfate: step 3/3. In terms of biological role, catalyzes the formation of sulfite from phosphoadenosine 5'-phosphosulfate (PAPS) using thioredoxin as an electron donor. The chain is Phosphoadenosine 5'-phosphosulfate reductase from Salmonella paratyphi A (strain AKU_12601).